The primary structure comprises 231 residues: Transmembrane protein 225 (231 aa).

Residues 1-13 (MMRIPNRSIQAAN) are Cytoplasmic-facing. The chain crosses the membrane as a helical span at residues 14 to 34 (IFFSSGAILLLIAGLIMENWV). Residues 35–71 (ELIPKVRKDKVTHSPWLGCCPPFWPEESLEAIRRMMM) lie on the Extracellular side of the membrane. A helical transmembrane segment spans residues 72-92 (MSLNISIYLNLIIGLQFTYMI). Residues 93 to 99 (SQNKCVH) are Cytoplasmic-facing. A helical membrane pass occupies residues 100–120 (LLIGFLSFFTGCLLFYAIIVY). The Extracellular portion of the chain corresponds to 121–139 (HHKLNKGQYVYFVNYKTKW). The helical transmembrane segment at 140–160 (IVFTIYLTIALFLTCGIFSFI) threads the bilayer. Topologically, residues 161 to 231 (QCTNRCACMK…LQSRRVTWAL (71 aa)) are cytoplasmic. The short motif at 225–229 (RRVTW) is the RVxF element.

In terms of assembly, interacts (via RVxF motif) with PPP1CC. As to expression, expressed in testis, specifically in spermatocytes and round spermatids.

The protein localises to the cytoplasmic vesicle. Its subcellular location is the secretory vesicle. It localises to the acrosome membrane. Its function is as follows. Probably inhibits protein phosphatase 1 (PP1) in sperm via binding to catalytic subunit PPP1CC. This chain is Transmembrane protein 225 (Tmem225), found in Rattus norvegicus (Rat).